Consider the following 396-residue polypeptide: ATP-dependent RNA helicase eIF4A (396 aa).

A Q motif motif is present at residues 22–50; it reads YSFDDLKLKEELLRGIFGYGFVEPSAIQQ. A Helicase ATP-binding domain is found at 53-223; sequence ILPIIEGKDV…SKFMKDPVRI (171 aa). 66 to 73 is a binding site for ATP; the sequence is AQSGTGKT. Residues 171 to 174 carry the DEAD box motif; that stretch reads DEAD. In terms of domain architecture, Helicase C-terminal spans 234–395; that stretch reads GIGQYYVNVE…ELPSSISELF (162 aa).

It belongs to the DEAD box helicase family. eIF4A subfamily. Component of the eIF4F complex, which composition varies with external and internal environmental conditions. It is composed of at least eIF4A, eIF4E and eIF4G.

The protein resides in the cytoplasm. It carries out the reaction ATP + H2O = ADP + phosphate + H(+). In terms of biological role, ATP-dependent RNA helicase which is a subunit of the eIF4F complex involved in cap recognition and is required for mRNA binding to ribosome. In the current model of translation initiation, eIF4A unwinds RNA secondary structures in the 5'-UTR of mRNAs which is necessary to allow efficient binding of the small ribosomal subunit, and subsequent scanning for the initiator codon. The sequence is that of ATP-dependent RNA helicase eIF4A (TIF1) from Kluyveromyces lactis (strain ATCC 8585 / CBS 2359 / DSM 70799 / NBRC 1267 / NRRL Y-1140 / WM37) (Yeast).